The sequence spans 465 residues: Ribosome biogenesis protein YTM1 (465 aa).

The ubiquitin-like (UBL) domain stretch occupies residues 18 to 99; sequence ARLRFSTRDE…ETTLDVEYVR (82 aa). WD repeat units follow at residues 111 to 153, 160 to 198, 205 to 242, 277 to 317, 319 to 358, 364 to 404, and 427 to 465; these read LHDD…IHTS, GHQSAIKCVRFLSASQIVSSGIDRTVRLWKYTDQEKGIT, GHKGSVDSIAVHGNRILSASADHTVGFWSTKKSESPAV, GHTA…LVDT, TTSHSLLCAQHLPEHTLLAAGSAARHVTLIDPRASATTVS, GHTN…TDTD, and GDGVKVFDVCWDKKVGIVSVGEDKVIQINRGEGVVPKTA. Residues 235–272 are disordered; that stretch reads KKSESPAVPQNLLPSSSARSSKRRKLNSSASTSQRGPL.

It belongs to the WD repeat WDR12/YTM1 family. As to quaternary structure, component of the NOP7 complex, composed of ERB1, NOP7 and YTM1. The complex is held together by ERB1, which interacts with NOP7 via its N-terminal domain and with YTM1 via a high-affinity interaction between the seven-bladed beta-propeller domains of the 2 proteins. The NOP7 complex associates with the 66S pre-ribosome. Interacts (via UBL domain) with MDN1 (via VWFA/MIDAS domain).

The protein resides in the nucleus. It is found in the nucleolus. It localises to the nucleoplasm. Component of the NOP7 complex, which is required for maturation of the 25S and 5.8S ribosomal RNAs and formation of the 60S ribosome. This Coccidioides immitis (strain RS) (Valley fever fungus) protein is Ribosome biogenesis protein YTM1.